The sequence spans 77 residues: Chaplin-H (77 aa).

The first 25 residues, 1–25, serve as a signal peptide directing secretion; the sequence is MLKKVVAAAAATGGLVLAGAGMAVA. The Chaplin domain maps to 36–76; that stretch reads SPGVLSGNVVQVPVHVPVNVCGNTISVIGLLNPAFGNVCIN. Forms amyloid fibrils in vitro stretches follow at residues 38-54 and 57-72; these read GVLS…VPVN and GNTI…AFGN. A disulfide bond links Cys-56 and Cys-74.

It belongs to the chaplin family. Short chaplin subfamily. Homodimer; disulfide linked. About 10% of ChpH isolated from cell wall forms disulfide-bonded homodimers.

It is found in the cell surface. Its subcellular location is the secreted. The protein localises to the cell wall. It localises to the fimbrium. Its function is as follows. One of 8 partially redundant surface-active proteins required for efficient formation of aerial mycelium; the short chaplins assemble into a hydrophobic, amyloidal fibrillar surface layer that envelopes and protects aerial hyphae and spores, presumably anchored to the long chaplins. Chaplins have an overlapping function with the surface-active SapB peptide; chaplins are essential on minimal medium while on rich medium both chaplins and SapB are required for efficient aerial hyphae formation. Chaplins are also involved in cell attachment to a hydrophobic surface. Forms amyloid fibrils in vitro probably composed of stacked beta-sheets. A small chaplin extract (ChpD, ChpE, ChpF, ChpG and ChpH) self-assembles into 2 different amyloids; small fibrils at the air-water interface form an amphipathic membrane that resembles spore-surface structures involved in aerial hyphae formation, and hydrophilic fibrils in solution that resemble the fibers that attach cells to a hydrophobic surface. At the air-water interface the hydrophilic surface is in contact with water (probably equivalent to the peptidoglycan layer), while the hydrophobic face is exposed to the air, making the surface of the aerial hyphae hydrophobic. A minimal chaplin strain capable of forming aerial mycelium/hyphae on minimal medium contains ChpC, ChpE and ChpH. The strain also has restored rodlet formation on the hyphae surface. A small chaplin extract applied to a chaplin-deficient strain restores aerial hyphae formation. The small chaplin extract forms an amyloid-like structure similar to that seen on the surface of cells without rodlets (rdlA-rdlB deletions), and is highly surface active, reducing surface tension from 72 to 26 mJ/m(2), which probably allows escape of hyphae from an aqueous environment into air. In Streptomyces coelicolor (strain ATCC BAA-471 / A3(2) / M145), this protein is Chaplin-H.